A 138-amino-acid chain; its full sequence is Small ribosomal subunit protein uS11c (138 aa).

A disordered region spans residues 1–22 (MAKSIPRISSRRNGPIGSGKTV).

It belongs to the universal ribosomal protein uS11 family. In terms of assembly, part of the 30S ribosomal subunit.

It is found in the plastid. The protein is Small ribosomal subunit protein uS11c of Cuscuta exaltata (Tall dodder).